Consider the following 343-residue polypeptide: Anthranilate phosphoribosyltransferase (343 aa).

5-phospho-alpha-D-ribose 1-diphosphate contacts are provided by residues Gly84, 87–88, Thr92, 94–97, 112–120, and Ser124; these read GD, NIST, and KHGNRGVSS. Residue Gly84 coordinates anthranilate. Ser96 lines the Mg(2+) pocket. Asn115 is a binding site for anthranilate. Residue Arg170 participates in anthranilate binding. Mg(2+)-binding residues include Asp229 and Glu230.

This sequence belongs to the anthranilate phosphoribosyltransferase family. In terms of assembly, homodimer. Mg(2+) is required as a cofactor.

The enzyme catalyses N-(5-phospho-beta-D-ribosyl)anthranilate + diphosphate = 5-phospho-alpha-D-ribose 1-diphosphate + anthranilate. Its pathway is amino-acid biosynthesis; L-tryptophan biosynthesis; L-tryptophan from chorismate: step 2/5. In terms of biological role, catalyzes the transfer of the phosphoribosyl group of 5-phosphorylribose-1-pyrophosphate (PRPP) to anthranilate to yield N-(5'-phosphoribosyl)-anthranilate (PRA). This is Anthranilate phosphoribosyltransferase from Burkholderia multivorans (strain ATCC 17616 / 249).